A 365-amino-acid chain; its full sequence is Isopentenyl-diphosphate delta-isomerase (365 aa).

4 to 5 (RK) contributes to the substrate binding site. Residues 62–64 (GMT), S92, and N121 each bind FMN. 92-94 (SQR) is a substrate binding site. Residue Q155 participates in substrate binding. E156 contacts Mg(2+). FMN-binding positions include K187, T216, 267–269 (GVR), and 288–289 (AL).

Belongs to the IPP isomerase type 2 family. As to quaternary structure, homooctamer. Dimer of tetramers. FMN serves as cofactor. Requires NADPH as cofactor. It depends on Mg(2+) as a cofactor.

It localises to the cytoplasm. The catalysed reaction is isopentenyl diphosphate = dimethylallyl diphosphate. Involved in the biosynthesis of isoprenoids. Catalyzes the 1,3-allylic rearrangement of the homoallylic substrate isopentenyl (IPP) to its allylic isomer, dimethylallyl diphosphate (DMAPP). This chain is Isopentenyl-diphosphate delta-isomerase, found in Methanopyrus kandleri (strain AV19 / DSM 6324 / JCM 9639 / NBRC 100938).